The sequence spans 557 residues: Dihydroxy-acid dehydratase (557 aa).

Cys-50 contacts [2Fe-2S] cluster. Asp-82 provides a ligand contact to Mg(2+). Cys-123 is a [2Fe-2S] cluster binding site. Mg(2+) contacts are provided by Asp-124 and Lys-125. Lys-125 carries the N6-carboxylysine modification. Residue Cys-195 participates in [2Fe-2S] cluster binding. Glu-447 serves as a coordination point for Mg(2+). Catalysis depends on Ser-473, which acts as the Proton acceptor.

The protein belongs to the IlvD/Edd family. As to quaternary structure, homodimer. The cofactor is [2Fe-2S] cluster. Mg(2+) is required as a cofactor.

The enzyme catalyses (2R)-2,3-dihydroxy-3-methylbutanoate = 3-methyl-2-oxobutanoate + H2O. The catalysed reaction is (2R,3R)-2,3-dihydroxy-3-methylpentanoate = (S)-3-methyl-2-oxopentanoate + H2O. It participates in amino-acid biosynthesis; L-isoleucine biosynthesis; L-isoleucine from 2-oxobutanoate: step 3/4. The protein operates within amino-acid biosynthesis; L-valine biosynthesis; L-valine from pyruvate: step 3/4. Its function is as follows. Functions in the biosynthesis of branched-chain amino acids. Catalyzes the dehydration of (2R,3R)-2,3-dihydroxy-3-methylpentanoate (2,3-dihydroxy-3-methylvalerate) into 2-oxo-3-methylpentanoate (2-oxo-3-methylvalerate) and of (2R)-2,3-dihydroxy-3-methylbutanoate (2,3-dihydroxyisovalerate) into 2-oxo-3-methylbutanoate (2-oxoisovalerate), the penultimate precursor to L-isoleucine and L-valine, respectively. In Burkholderia pseudomallei (strain 1710b), this protein is Dihydroxy-acid dehydratase.